We begin with the raw amino-acid sequence, 144 residues long: 3-hydroxyacyl-[acyl-carrier-protein] dehydratase FabZ (144 aa).

The active site involves H51.

Belongs to the thioester dehydratase family. FabZ subfamily.

The protein localises to the cytoplasm. It carries out the reaction a (3R)-hydroxyacyl-[ACP] = a (2E)-enoyl-[ACP] + H2O. Its function is as follows. Involved in unsaturated fatty acids biosynthesis. Catalyzes the dehydration of short chain beta-hydroxyacyl-ACPs and long chain saturated and unsaturated beta-hydroxyacyl-ACPs. The sequence is that of 3-hydroxyacyl-[acyl-carrier-protein] dehydratase FabZ from Clostridium botulinum (strain ATCC 19397 / Type A).